The sequence spans 201 residues: MALHDENVVWHSHPVTVQQRELHHCHRGVVLWFTGLSGSGKSTVAGALEEALHKLGVSTYLLDGDNVRHGLCSDLGFSDADRKENIRRVGEVANLMVEAGLVVLTAFISPHRAERQMVRERVGEGRFIEVFVDTPLAICEARDPKGLYKKARAGELRNFTGIDSVYEAPESAEIHLNGEQLVTNLVQQLLDLLRQNDIIRS.

35–42 (GLSGSGKS) lines the ATP pocket. Residue serine 109 is the Phosphoserine intermediate of the active site.

This sequence belongs to the APS kinase family.

The catalysed reaction is adenosine 5'-phosphosulfate + ATP = 3'-phosphoadenylyl sulfate + ADP + H(+). Its pathway is sulfur metabolism; hydrogen sulfide biosynthesis; sulfite from sulfate: step 2/3. In terms of biological role, catalyzes the synthesis of activated sulfate. The protein is Adenylyl-sulfate kinase of Shigella boydii serotype 18 (strain CDC 3083-94 / BS512).